A 741-amino-acid chain; its full sequence is Alpha-1,6-mannosylglycoprotein 6-beta-N-acetylglucosaminyltransferase A (741 aa).

Topologically, residues Met-1–Lys-13 are cytoplasmic. Residues Leu-14–Leu-30 traverse the membrane as a helical; Signal-anchor for type II membrane protein segment. Topologically, residues His-31–Leu-741 are lumenal. N-linked (GlcNAc...) asparagine glycosylation is found at Asn-110, Asn-115, and Asn-118. Intrachain disulfides connect Cys-145–Cys-183, Cys-156–Cys-196, Cys-172–Cys-338, Cys-372–Cys-626, Cys-649–Cys-724, Cys-653–Cys-726, Cys-660–Cys-713, Cys-681–Cys-702, and Cys-737–Cys-740. Residues Asn-213–Leu-741 are sufficient for catalytic activity. Residues Lys-264–Lys-269 are important for activity in FGF2 release. N-linked (GlcNAc...) asparagine glycosylation is present at Asn-334. Substrate is bound at residue Asp-378–Ser-379. 2 N-linked (GlcNAc...) asparagine glycosylation sites follow: Asn-433 and Asn-447. Position 526 (Glu-526) interacts with UDP-N-acetyl-alpha-D-glucosamine. Position 554 (Lys-554) interacts with substrate.

Belongs to the glycosyltransferase 18 family. In terms of processing, N-glycosylated. A secreted form is released from the membrane after cleavage by gamma-secretase.

Its subcellular location is the golgi apparatus membrane. It is found in the secreted. The catalysed reaction is N(4)-{beta-D-GlcNAc-(1-&gt;2)-[beta-D-GlcNAc-(1-&gt;4)]-alpha-D-Man-(1-&gt;3)-[beta-D-GlcNAc-(1-&gt;2)-alpha-D-Man-(1-&gt;6)]-beta-D-Man-(1-&gt;4)-beta-D-GlcNAc-(1-&gt;4)-beta-D-GlcNAc}-L-asparaginyl-[protein] + UDP-N-acetyl-alpha-D-glucosamine = N(4)-{beta-D-GlcNAc-(1-&gt;2)-[beta-D-GlcNAc-(1-&gt;4)]-alpha-D-Man-(1-&gt;3)-[beta-D-GlcNAc-(1-&gt;2)-[beta-D-GlcNAc-(1-&gt;6)]-alpha-D-Man-(1-&gt;6)]-beta-D-Man-(1-&gt;4)-beta-D-GlcNAc-(1-&gt;4)-beta-D-GlcNAc}-L-asparaginyl-[protein] + UDP + H(+). It participates in protein modification; protein glycosylation. Activity is increased by Mn(2+) and Mg(2+). Its function is as follows. Catalyzes the addition of N-acetylglucosamine (GlcNAc) in beta 1-6 linkage to the alpha-linked mannose of biantennary N-linked oligosaccharides. Catalyzes an important step in the biosynthesis of branched, complex-type N-glycans, such as those found on EGFR, TGFR (TGF-beta receptor) and CDH2. Via its role in the biosynthesis of complex N-glycans, plays an important role in the activation of cellular signaling pathways, reorganization of the actin cytoskeleton, cell-cell adhesion and cell migration. MGAT5-dependent EGFR N-glycosylation enhances the interaction between EGFR and LGALS3 and thereby prevents rapid EGFR endocytosis and prolongs EGFR signaling. Required for efficient interaction between TGFB1 and its receptor. Enhances activation of intracellular signaling pathways by several types of growth factors, including FGF2, PDGF, IGF, TGFB1 and EGF. MGAT5-dependent CDH2 N-glycosylation inhibits CDH2-mediated homotypic cell-cell adhesion and contributes to the regulation of downstream signaling pathways. Promotes cell migration. Contributes to the regulation of the inflammatory response. MGAT5-dependent TCR N-glycosylation enhances the interaction between TCR and LGALS3, limits agonist-induced TCR clustering, and thereby dampens TCR-mediated responses to antigens. Required for normal leukocyte evasation and accumulation at sites of inflammation. Inhibits attachment of monocytes to the vascular endothelium and subsequent monocyte diapedesis. Promotes proliferation of umbilical vein endothelial cells and angiogenesis, at least in part by promoting the release of the growth factor FGF2 from the extracellular matrix. The chain is Alpha-1,6-mannosylglycoprotein 6-beta-N-acetylglucosaminyltransferase A (MGAT5) from Homo sapiens (Human).